We begin with the raw amino-acid sequence, 188 residues long: Peptidyl-tRNA hydrolase (188 aa).

Tyrosine 14 is a tRNA binding site. Catalysis depends on histidine 19, which acts as the Proton acceptor. Residues tyrosine 64, asparagine 66, and asparagine 112 each contribute to the tRNA site.

The protein belongs to the PTH family. In terms of assembly, monomer.

The protein localises to the cytoplasm. The catalysed reaction is an N-acyl-L-alpha-aminoacyl-tRNA + H2O = an N-acyl-L-amino acid + a tRNA + H(+). Functionally, hydrolyzes ribosome-free peptidyl-tRNAs (with 1 or more amino acids incorporated), which drop off the ribosome during protein synthesis, or as a result of ribosome stalling. In terms of biological role, catalyzes the release of premature peptidyl moieties from peptidyl-tRNA molecules trapped in stalled 50S ribosomal subunits, and thus maintains levels of free tRNAs and 50S ribosomes. The chain is Peptidyl-tRNA hydrolase from Clostridium tetani (strain Massachusetts / E88).